The chain runs to 687 residues: Putative ammonium transporter 3 (687 aa).

Helical transmembrane passes span 39–59, 77–97, 134–154, 162–182, 196–216, 240–260, 272–292, 299–319, 323–343, 352–372, and 404–424; these read AVWI…FGLL, VVDV…FSYG, ASFL…SGAV, SYIL…HWVW, FAGC…ATVF, LGTF…VWGI, AVAT…ISFV, VNFL…ICAV, WHAL…LPLL, VGIV…VGIF, and CTAA…FLIS. Disordered stretches follow at residues 521–544, 549–568, and 592–687; these read RTNA…FNNQ, AVSS…RRTE, and PPEE…NPPV. Positions 549 to 564 are enriched in polar residues; it reads AVSSTVSTARNGPSTG. Composition is skewed to low complexity over residues 614–632 and 648–665; these read SPSS…SPSI and STAS…KNST.

Belongs to the ammonia transporter channel (TC 1.A.11.2) family.

Its subcellular location is the membrane. Involved in the uptake of ammonia. The sequence is that of Putative ammonium transporter 3 (amt-3) from Caenorhabditis elegans.